The chain runs to 256 residues: Putative transcription factor 001R (256 aa).

Functionally, transcription activation. This chain is Putative transcription factor 001R, found in Frog virus 3 (isolate Goorha) (FV-3).